We begin with the raw amino-acid sequence, 4034 residues long: Polyketide synthase-nonribosomal peptide synthetase ACE1 (4034 aa).

Positions 10 to 448 (TEPIAIIGSG…GANAHVILES (439 aa)) constitute a Ketosynthase family 3 (KS3) domain. Catalysis depends on for beta-ketoacyl synthase activity residues Cys-183, His-322, and His-368. The acyl transferase stretch occupies residues 560–879 (VFTGQGAQWA…PYFGCLSRGT (320 aa)). Residues 951–1082 (NELLGTRLPD…GDLVVLLGEP (132 aa)) are N-terminal hotdog fold. In terms of domain architecture, PKS/mFAS DH spans 951-1257 (NELLGTRLPD…TKPLSPPSAA (307 aa)). The interval 952–1252 (ELLGTRLPDD…LQGLHTKPLS (301 aa)) is dehydratase (DH) domain. Residue His-983 is the Proton acceptor; for dehydratase activity of the active site. Residues 1097 to 1257 (MKDIDEERFY…TKPLSPPSAA (161 aa)) form a C-terminal hotdog fold region. The active-site Proton donor; for dehydratase activity is Asp-1157. The methyltransferase (MT) domain stretch occupies residues 1396–1594 (NMLNRFYSDA…SGADIVTPHH (199 aa)). The interval 2144–2317 (TYWLVGLTGG…AGSSVEIGCI (174 aa)) is ketoreductase (KR)domain. One can recognise a Carrier 1 domain in the interval 2424-2505 (KSSEEVLDIL…LLLEFVQGLI (82 aa)). Position 2465 is an O-(pantetheine 4'-phosphoryl)serine (Ser-2465). The disordered stretch occupies residues 2512–2598 (KLDGSDGADA…SPTTSASMAS (87 aa)). A compositionally biased stretch (low complexity) spans 2556 to 2577 (PSGPASPTSPSSATASPGRSRS). Polar residues predominate over residues 2586–2598 (TPVSPTTSASMAS). The interval 2608–3037 (TVPVSFGQSR…ATSLNRPAIY (430 aa)) is condensation. The tract at residues 3073 to 3473 (KYATKFALRN…GGLIIEGRID (401 aa)) is adenylation. In terms of domain architecture, Carrier 2 spans 3598-3678 (AELGSDQARM…AMTDLVLSDD (81 aa)). Ser-3638 carries the post-translational modification O-(pantetheine 4'-phosphoryl)serine. Positions 3719-3944 (LTGATGFLGR…DFVSVENVAA (226 aa)) are reductase-like.

This sequence belongs to the NRP synthetase family.

The protein localises to the cytoplasm. Its pathway is secondary metabolite biosynthesis. Functionally, hybrid PKS-NRPS synthetase; part of the gene cluster that mediates the biosynthesis of a tyrosine-derived cytochalasan acting as a fungal signal recognized by resistant rice plants and leads to avirulence in Pi33 resistant rice cultivars. The first step in the pathway is catalyzed by the hybrid PKS-NRPS ACE1, assisted by the enoyl reductase RAP1, that are responsible for fusion of the tyrosine precursor and the polyketide backbone. The polyketide synthase module (PKS) of ACE1 is responsible for the synthesis of the polyketide backbone and the downstream nonribosomal peptide synthetase (NRPS) amidates the carboxyl end of the polyketide with the tyrosine precursor. Because ACE1 lacks a designated enoylreductase (ER) domain, the required activity is provided the enoyl reductase RAP1. Reduction by the hydrolyase ORFZ, followed by dehydration and intra-molecular Diels-Alder cyclization by the Diels-Alderase ORF3 then yield the required isoindolone-fused macrocycle. A number of oxidative steps catalyzed by the tailoring enzymes identified within the cluster, including cytochrome P450 monooxygenases CYP1 to CYP4, the FAD-linked oxidoreductase OXR2 and the short-chain dehydrogenase/reductase OXR1, are further required to afford the final cytochalasans that confer avirulence and which have still to be identified. The monooxygenase CYP1 has been shown to be a site-selective C-18 hydroxylase whereas the function of CYP3 is the site-selective epoxidation of the C-6/C-7 olefin that is present in some intermediate compounds. Finally, SYN2 and RAP2 are not required for avirulence in Pi33 resistant rice cultivars. This Pyricularia oryzae (strain 70-15 / ATCC MYA-4617 / FGSC 8958) (Rice blast fungus) protein is Polyketide synthase-nonribosomal peptide synthetase ACE1.